The primary structure comprises 279 residues: MGIALENVNFIYQEGTPLASAALSDVSLTIEDGSYTALIGHTGSGKSTILQLLNGLLVPSQGSVRVFDTLITSTSKNKDIRQIRKQVGLVFQFAENQIFEETVLKDVAFGPQNFGVSEEDAVKTAREKLALVGIDESLFDRSPFELSGGQMRRVAIAGILAMEPSILVLDEPTAGLDPLGRKELMTLFKKLHQSGMTIVLVTHLMDDVAEYANQVYVMEKGRLVKGGKPSDVFQDVVFMEEVQLGVPKITAFCKRLADRGVSFKRLPIKIEEFKESLNG.

The region spanning 3–245 is the ABC transporter domain; sequence IALENVNFIY…VVFMEEVQLG (243 aa). ATP is bound at residue 40-47; the sequence is GHTGSGKS.

This sequence belongs to the ABC transporter superfamily. Energy-coupling factor EcfA family. In terms of assembly, forms a stable energy-coupling factor (ECF) transporter complex composed of 2 membrane-embedded substrate-binding proteins (S component), 2 ATP-binding proteins (A component) and 2 transmembrane proteins (T component).

It localises to the cell membrane. Functionally, ATP-binding (A) component of a common energy-coupling factor (ECF) ABC-transporter complex. Unlike classic ABC transporters this ECF transporter provides the energy necessary to transport a number of different substrates. The protein is Energy-coupling factor transporter ATP-binding protein EcfA2 of Streptococcus pneumoniae serotype 2 (strain D39 / NCTC 7466).